A 143-amino-acid chain; its full sequence is Mite group 2 allergen Pso o 2 (143 aa).

Positions 1–17 (MMKTLVVLAITLAVVSA) are cleaved as a signal peptide. Intrachain disulfides connect Cys-25–Cys-134, Cys-38–Cys-43, and Cys-89–Cys-94.

It belongs to the NPC2 family.

Its subcellular location is the secreted. This chain is Mite group 2 allergen Pso o 2 (ALLA), found in Psoroptes ovis (Sheep scab mite).